A 23-amino-acid polypeptide reads, in one-letter code: Caerin-4.2 (23 aa).

As to expression, expressed by the skin parotoid and/or rostral glands.

It localises to the secreted. Antibacterial peptide, that adopts an alpha helical conformation which can disrupt bacterial membranes. Each caerin displays a different antimicrobial specificity. The chain is Caerin-4.2 from Ranoidea caerulea (Green tree frog).